Consider the following 188-residue polypeptide: ATP synthase subunit delta (188 aa).

This sequence belongs to the ATPase delta chain family. F-type ATPases have 2 components, F(1) - the catalytic core - and F(0) - the membrane proton channel. F(1) has five subunits: alpha(3), beta(3), gamma(1), delta(1), epsilon(1). F(0) has three main subunits: a(1), b(2) and c(10-14). The alpha and beta chains form an alternating ring which encloses part of the gamma chain. F(1) is attached to F(0) by a central stalk formed by the gamma and epsilon chains, while a peripheral stalk is formed by the delta and b chains.

The protein resides in the cell inner membrane. F(1)F(0) ATP synthase produces ATP from ADP in the presence of a proton or sodium gradient. F-type ATPases consist of two structural domains, F(1) containing the extramembraneous catalytic core and F(0) containing the membrane proton channel, linked together by a central stalk and a peripheral stalk. During catalysis, ATP synthesis in the catalytic domain of F(1) is coupled via a rotary mechanism of the central stalk subunits to proton translocation. Its function is as follows. This protein is part of the stalk that links CF(0) to CF(1). It either transmits conformational changes from CF(0) to CF(1) or is implicated in proton conduction. This chain is ATP synthase subunit delta, found in Rhizobium leguminosarum bv. trifolii (strain WSM2304).